Reading from the N-terminus, the 161-residue chain is MRIGVYPGSFDPVTNGHMDIVERSVGLFDRLIVAVAKNAQKKPLFSVEERVEILKNVLKKYPNIVVDTFDGLTVTYALQQGAIAIVRGLRAFSDFENEFIFALTNKKLAPDLETVYLMTRAEYSFISSTTVKEVASFKGSLSGMVPEIVAQKIQDKYGYGK.

Residue Ser-9 coordinates substrate. ATP is bound by residues 9-10 and His-17; that span reads SF. 3 residues coordinate substrate: Lys-41, Thr-73, and Arg-87. Residues 88 to 90, Glu-98, and 123 to 129 contribute to the ATP site; these read GLR and YSFISST.

Belongs to the bacterial CoaD family. As to quaternary structure, homohexamer. It depends on Mg(2+) as a cofactor.

It is found in the cytoplasm. It carries out the reaction (R)-4'-phosphopantetheine + ATP + H(+) = 3'-dephospho-CoA + diphosphate. It participates in cofactor biosynthesis; coenzyme A biosynthesis; CoA from (R)-pantothenate: step 4/5. Its function is as follows. Reversibly transfers an adenylyl group from ATP to 4'-phosphopantetheine, yielding dephospho-CoA (dPCoA) and pyrophosphate. The chain is Phosphopantetheine adenylyltransferase from Desulforamulus reducens (strain ATCC BAA-1160 / DSM 100696 / MI-1) (Desulfotomaculum reducens).